The following is a 184-amino-acid chain: Ribosome maturation factor RimM (184 aa).

In terms of domain architecture, PRC barrel spans 104–184 (SEDEFYWREL…RIEVDWDPGF (81 aa)).

Belongs to the RimM family. As to quaternary structure, binds ribosomal protein uS19.

It localises to the cytoplasm. Functionally, an accessory protein needed during the final step in the assembly of 30S ribosomal subunit, possibly for assembly of the head region. Essential for efficient processing of 16S rRNA. May be needed both before and after RbfA during the maturation of 16S rRNA. It has affinity for free ribosomal 30S subunits but not for 70S ribosomes. This chain is Ribosome maturation factor RimM, found in Vibrio atlanticus (strain LGP32) (Vibrio splendidus (strain Mel32)).